A 26-amino-acid polypeptide reads, in one-letter code: DAAEPWQLGFQDAATPIMQGIIDLHH.

The protein belongs to the cytochrome c oxidase subunit 2 family. As to quaternary structure, component of the cytochrome c oxidase (complex IV, CIV), a multisubunit enzyme composed of a catalytic core of 3 subunits and several supernumerary subunits. The complex exists as a monomer or a dimer and forms supercomplexes (SCs) in the inner mitochondrial membrane with ubiquinol-cytochrome c oxidoreductase (cytochrome b-c1 complex, complex III, CIII). It depends on Cu cation as a cofactor.

Its subcellular location is the mitochondrion inner membrane. It carries out the reaction 4 Fe(II)-[cytochrome c] + O2 + 8 H(+)(in) = 4 Fe(III)-[cytochrome c] + 2 H2O + 4 H(+)(out). Component of the cytochrome c oxidase, the last enzyme in the mitochondrial electron transport chain which drives oxidative phosphorylation. The respiratory chain contains 3 multisubunit complexes succinate dehydrogenase (complex II, CII), ubiquinol-cytochrome c oxidoreductase (cytochrome b-c1 complex, complex III, CIII) and cytochrome c oxidase (complex IV, CIV), that cooperate to transfer electrons derived from NADH and succinate to molecular oxygen, creating an electrochemical gradient over the inner membrane that drives transmembrane transport and the ATP synthase. Cytochrome c oxidase is the component of the respiratory chain that catalyzes the reduction of oxygen to water. Electrons originating from reduced cytochrome c in the intermembrane space (IMS) are transferred via the dinuclear copper A center (CU(A)) of subunit 2 and heme A of subunit 1 to the active site in subunit 1, a binuclear center (BNC) formed by heme A3 and copper B (CU(B)). The BNC reduces molecular oxygen to 2 water molecules using 4 electrons from cytochrome c in the IMS and 4 protons from the mitochondrial matrix. This Solanum tuberosum (Potato) protein is Cytochrome c oxidase subunit 2 (COX2).